Here is a 78-residue protein sequence, read N- to C-terminus: Large ribosomal subunit protein bL28 (78 aa).

A disordered region spans residues 1 to 27 (MSAYCQVTGRKPSFGKSVSHSHRRTNR).

It belongs to the bacterial ribosomal protein bL28 family.

The protein is Large ribosomal subunit protein bL28 of Corynebacterium kroppenstedtii (strain DSM 44385 / JCM 11950 / CIP 105744 / CCUG 35717).